The following is a 291-amino-acid chain: S-adenosylmethionine uptake transporter (291 aa).

A run of 10 helical transmembrane segments spans residues 4–24 (ALKTYSIGIGWFLLSLVSSSA), 41–61 (VAFFRFFFSSIVLLPFVVYYG), 74–91 (ILRGLLLFFGMTSWTYGL), 98–118 (TATVISFSIPLFTLILAVFFL), 121–141 (NIIWQRWVVTIVGFVGLVITL), 148–168 (FNPEMLYFVLAAISFAMLDII), 178–198 (MISMLFYSAIVTAVVSIPAAA), 206–226 (LFELALLFILGSSGSLILFLL), 237–257 (ATAPYRYLELVISAIAAYFIF), and 260–280 (FPDKSTLHGAVIIIPATLFII). 2 consecutive EamA domains span residues 21–141 (SSSA…VITL) and 160–280 (ISFA…LFII).

This sequence belongs to the drug/metabolite transporter (DMT) superfamily. 10 TMS drug/metabolite exporter (DME) (TC 2.A.7.3) family.

The protein resides in the cell inner membrane. Its function is as follows. Transports S-adenosylmethionine. In Rickettsia bellii (strain RML369-C), this protein is S-adenosylmethionine uptake transporter (sam).